The sequence spans 120 residues: NAD(P)H-quinone oxidoreductase subunit 3, chloroplastic (120 aa).

3 consecutive transmembrane segments (helical) span residues 9 to 29 (IFWA…LISG), 64 to 84 (MFAL…PWAM), and 88 to 108 (VLGV…IVGL).

It belongs to the complex I subunit 3 family. In terms of assembly, NDH is composed of at least 16 different subunits, 5 of which are encoded in the nucleus.

It localises to the plastid. The protein localises to the chloroplast thylakoid membrane. The enzyme catalyses a plastoquinone + NADH + (n+1) H(+)(in) = a plastoquinol + NAD(+) + n H(+)(out). It carries out the reaction a plastoquinone + NADPH + (n+1) H(+)(in) = a plastoquinol + NADP(+) + n H(+)(out). Its function is as follows. NDH shuttles electrons from NAD(P)H:plastoquinone, via FMN and iron-sulfur (Fe-S) centers, to quinones in the photosynthetic chain and possibly in a chloroplast respiratory chain. The immediate electron acceptor for the enzyme in this species is believed to be plastoquinone. Couples the redox reaction to proton translocation, and thus conserves the redox energy in a proton gradient. This Ceratophyllum demersum (Rigid hornwort) protein is NAD(P)H-quinone oxidoreductase subunit 3, chloroplastic.